Reading from the N-terminus, the 478-residue chain is Protein nucleotidyltransferase YdiU (478 aa).

Positions 84, 86, 87, 107, 119, 120, 170, and 177 each coordinate ATP. Asp-246 acts as the Proton acceptor in catalysis. Mg(2+)-binding residues include Asn-247 and Asp-256. Asp-256 contacts ATP.

The protein belongs to the SELO family. Mg(2+) is required as a cofactor. The cofactor is Mn(2+).

It catalyses the reaction L-seryl-[protein] + ATP = 3-O-(5'-adenylyl)-L-seryl-[protein] + diphosphate. The enzyme catalyses L-threonyl-[protein] + ATP = 3-O-(5'-adenylyl)-L-threonyl-[protein] + diphosphate. It carries out the reaction L-tyrosyl-[protein] + ATP = O-(5'-adenylyl)-L-tyrosyl-[protein] + diphosphate. The catalysed reaction is L-histidyl-[protein] + UTP = N(tele)-(5'-uridylyl)-L-histidyl-[protein] + diphosphate. It catalyses the reaction L-seryl-[protein] + UTP = O-(5'-uridylyl)-L-seryl-[protein] + diphosphate. The enzyme catalyses L-tyrosyl-[protein] + UTP = O-(5'-uridylyl)-L-tyrosyl-[protein] + diphosphate. Functionally, nucleotidyltransferase involved in the post-translational modification of proteins. It can catalyze the addition of adenosine monophosphate (AMP) or uridine monophosphate (UMP) to a protein, resulting in modifications known as AMPylation and UMPylation. The polypeptide is Protein nucleotidyltransferase YdiU (Escherichia coli O6:K15:H31 (strain 536 / UPEC)).